We begin with the raw amino-acid sequence, 368 residues long: Core-capsid bridging protein (368 aa).

2 disordered regions span residues Glu-17 to Asp-49 and Gly-307 to Leu-340. A compositionally biased stretch (basic and acidic residues) spans Pro-22 to Pro-31. 2 stretches are compositionally biased toward basic residues: residues Arg-32–Lys-41 and Arg-314–Gln-337.

It belongs to the adenoviridae core-capsid bridging protein family. As to quaternary structure, monomer. Homodimer. Exists in equilibrium between monomers and dimers in solution. Interacts with the histone-like nucleoprotein; this interactions bridge the virus core to the capsid. Interacts with core protein X; this interactions bridge the virus core to the capsid. Interacts with the endosome lysis protein VI; this interactions bridge the virus core to the capsid. Interacts with the peripentonal hexons. Interacts with host NPM1; this interaction might play a role in virus assembly. Post-translationally, during virion entry, is ubiquitinated at the nuclear pore complex by host MIB1. This dissociates viral genomic DNA from capsid and allows genome delivery into nucleus for infection.

It is found in the virion. It localises to the host nucleus. The protein resides in the host nucleolus. Its function is as follows. Associates loosely with the viral DNA to form an outer shell around the nucleoprotein-DNA complex and links it with the capsid by binding the endosome lysis protein. During entry, secures the viral genome in the capsid until it reaches the nuclear pore complex, preventing innate immunity responses. Dissociates from the viral genome at nuclear pore. Might be involved in nuclear capsid assembly of the viral particles through its association with NPM1/nucleophosmin. This chain is Core-capsid bridging protein, found in Human adenovirus C serotype 5 (HAdV-5).